The following is a 505-amino-acid chain: Lysine--tRNA ligase (505 aa).

Residues E415 and E422 each contribute to the Mg(2+) site.

Belongs to the class-II aminoacyl-tRNA synthetase family. Homodimer. The cofactor is Mg(2+).

It is found in the cytoplasm. It carries out the reaction tRNA(Lys) + L-lysine + ATP = L-lysyl-tRNA(Lys) + AMP + diphosphate. This chain is Lysine--tRNA ligase, found in Pectobacterium atrosepticum (strain SCRI 1043 / ATCC BAA-672) (Erwinia carotovora subsp. atroseptica).